A 430-amino-acid chain; its full sequence is Adenylosuccinate synthetase (430 aa).

GTP is bound by residues 12–18 (GDEGKGK) and 40–42 (GHT). The active-site Proton acceptor is the Asp-13. The Mg(2+) site is built by Asp-13 and Gly-40. IMP contacts are provided by residues 13–16 (DEGK), 38–41 (NAGH), Thr-128, Arg-142, Gln-223, Thr-238, and Arg-302. The Proton donor role is filled by His-41. 298–304 (TTTGRPR) is a binding site for substrate. GTP-binding positions include Arg-304, 330-332 (SID), and 412-414 (SVG).

Belongs to the adenylosuccinate synthetase family. In terms of assembly, homodimer. Requires Mg(2+) as cofactor.

Its subcellular location is the cytoplasm. It carries out the reaction IMP + L-aspartate + GTP = N(6)-(1,2-dicarboxyethyl)-AMP + GDP + phosphate + 2 H(+). The protein operates within purine metabolism; AMP biosynthesis via de novo pathway; AMP from IMP: step 1/2. Its function is as follows. Plays an important role in the de novo pathway of purine nucleotide biosynthesis. Catalyzes the first committed step in the biosynthesis of AMP from IMP. This chain is Adenylosuccinate synthetase, found in Exiguobacterium sibiricum (strain DSM 17290 / CCUG 55495 / CIP 109462 / JCM 13490 / 255-15).